Here is a 173-residue protein sequence, read N- to C-terminus: Protein GrpE (173 aa).

Positions M1 to E28 are enriched in basic and acidic residues. The disordered stretch occupies residues M1–L30.

Belongs to the GrpE family. In terms of assembly, homodimer.

The protein resides in the cytoplasm. Participates actively in the response to hyperosmotic and heat shock by preventing the aggregation of stress-denatured proteins, in association with DnaK and GrpE. It is the nucleotide exchange factor for DnaK and may function as a thermosensor. Unfolded proteins bind initially to DnaJ; upon interaction with the DnaJ-bound protein, DnaK hydrolyzes its bound ATP, resulting in the formation of a stable complex. GrpE releases ADP from DnaK; ATP binding to DnaK triggers the release of the substrate protein, thus completing the reaction cycle. Several rounds of ATP-dependent interactions between DnaJ, DnaK and GrpE are required for fully efficient folding. This is Protein GrpE from Methanosphaera stadtmanae (strain ATCC 43021 / DSM 3091 / JCM 11832 / MCB-3).